The following is a 432-amino-acid chain: Anaerobic glycerol-3-phosphate dehydrogenase subunit B (432 aa).

It belongs to the anaerobic G-3-P dehydrogenase subunit B family. As to quaternary structure, composed of a catalytic GlpA/B dimer and of membrane bound GlpC. FMN is required as a cofactor.

It carries out the reaction a quinone + sn-glycerol 3-phosphate = dihydroxyacetone phosphate + a quinol. Its pathway is polyol metabolism; glycerol degradation via glycerol kinase pathway; glycerone phosphate from sn-glycerol 3-phosphate (anaerobic route): step 1/1. Conversion of glycerol 3-phosphate to dihydroxyacetone. Uses fumarate or nitrate as electron acceptor. The polypeptide is Anaerobic glycerol-3-phosphate dehydrogenase subunit B (Haemophilus influenzae (strain PittEE)).